Reading from the N-terminus, the 427-residue chain is MSVSFENKETNRGVLTFTISQDQIKPELDRVFKSVKKSLNVPGFRKGHLPRPIFDQKFGEESLYQDVMNALLPNAYEAAVKEAGLEVVAQPKIDVTSMEKGQDWVITAEVVTKPEVKLGDYKNLEVSVDVEKEVTDADVEERIERERNNLAELVIKEAAAENGDTVVIDFVGSIDGVEFDGGKGENFSLGLGSGQFIPGFEDQLVGHSAGETVDVIVTFPEDYQAEDLAGKEAKFVTTIHEVKAKEVPALDDELAKDIDEEVETLADLKEKYRKELAAAKEEAYKDAVEGAAIDTAVENAEIVELPEEMIHEEVHRSVNEFLGNLQRQGINPDMYFQITGTTQEDLHNQYQAEAESRTKTNLVIEAVAKAEGFDASEEEIQKEVEQLAADYNMEVAQVQNLLSADMLKHDITIKKAVELITSTATVK.

The region spanning 163-248 (GDTVVIDFVG…IHEVKAKEVP (86 aa)) is the PPIase FKBP-type domain.

It belongs to the FKBP-type PPIase family. Tig subfamily.

The protein localises to the cytoplasm. The catalysed reaction is [protein]-peptidylproline (omega=180) = [protein]-peptidylproline (omega=0). Functionally, involved in protein export. Acts as a chaperone by maintaining the newly synthesized protein in an open conformation. Functions as a peptidyl-prolyl cis-trans isomerase. This is Trigger factor from Streptococcus pneumoniae (strain JJA).